The following is a 301-amino-acid chain: Probable serine acetyltransferase 3 (301 aa).

The disordered stretch occupies residues 280–301 (IGKKAEPQRELPGVTMEQRWSD).

It belongs to the transferase hexapeptide repeat family. As to quaternary structure, homomultimer.

It carries out the reaction L-serine + acetyl-CoA = O-acetyl-L-serine + CoA. It functions in the pathway amino-acid biosynthesis; L-cysteine biosynthesis; L-cysteine from L-serine: step 1/2. This Oryza sativa subsp. japonica (Rice) protein is Probable serine acetyltransferase 3 (SAT3).